A 123-amino-acid polypeptide reads, in one-letter code: Unknown 12C protein (123 aa).

The first 17 residues, 1–17 (MMSALFLVLSVSLLVSG), serve as a signal peptide directing secretion.

Contains 6 disulfide bonds. In terms of tissue distribution, expressed in acontia, a specialised envenomation structure laden with batteries of venom-containing nematocysts found only in the superfamily Metridioidea.

The protein localises to the secreted. The protein resides in the nematocyst. In terms of biological role, cysteine-rich protein with probable toxin activity. This Calliactis polypus (Hermit crab anemone) protein is Unknown 12C protein.